Consider the following 664-residue polypeptide: Protein-arginine deiminase type-3 (664 aa).

This sequence belongs to the protein arginine deiminase family. The cofactor is Ca(2+). In terms of tissue distribution, hair follicles, and epidermis at very low levels.

Its subcellular location is the cytoplasm. It carries out the reaction L-arginyl-[protein] + H2O = L-citrullyl-[protein] + NH4(+). Its function is as follows. Catalyzes the deimination of arginine residues of proteins. This Homo sapiens (Human) protein is Protein-arginine deiminase type-3 (PADI3).